Here is a 358-residue protein sequence, read N- to C-terminus: C-X-C chemokine receptor type 4-A (358 aa).

Residues 1-25 are important for chemokine binding and signaling; it reads MDGFSGGIDINIFDGNSTENGSGDF. The Extracellular segment spans residues 1 to 44; that stretch reads MDGFSGGIDINIFDGNSTENGSGDFEDFIEPCFMHENSDFNRIF. 2 N-linked (GlcNAc...) asparagine glycosylation sites follow: Asn-16 and Asn-20. 2 cysteine pairs are disulfide-bonded: Cys-32–Cys-281 and Cys-113–Cys-190. Residues 45-67 form a helical membrane-spanning segment; that stretch reads LPTIYSFIFLLGIIGNGLVVVVM. Residues 68-81 are Cytoplasmic-facing; that stretch reads GYQKKSRTMTDKYR. Residues 82–103 form a helical membrane-spanning segment; it reads LHLSVADLLFVFTLPFWSVDAA. Residues 98–101 are chemokine binding; the sequence is WSVD. Residues 104–114 lie on the Extracellular side of the membrane; the sequence is IGWYFKEFLCK. The helical transmembrane segment at 115–134 threads the bilayer; it reads AVHVIYTVNLYSSVLILAFI. The tract at residues 117-121 is chemokine binding; it reads HVIYT. At 135–158 the chain is on the cytoplasmic side; that stretch reads SLDRYLAIVHATNSQGSRKMLADK. The involved in dimerization; when bound to chemokine stretch occupies residues 139 to 151; that stretch reads YLAIVHATNSQGS. The chain crosses the membrane as a helical span at residues 159 to 178; it reads VVYAGVWLPALLLTVPDLVF. Residues 179-202 lie on the Extracellular side of the membrane; that stretch reads ARVSDENGQFVCDRIYPIENRETW. The tract at residues 190–194 is chemokine binding, important for signaling; sequence CDRIY. The chain crosses the membrane as a helical span at residues 203 to 223; it reads TVGFRFLHITVGLILPGLIIL. Residues 224-248 lie on the Cytoplasmic side of the membrane; sequence ICYCVIISKLSHSKGHQKRKALKTT. Residues 249–268 traverse the membrane as a helical segment; it reads VILILAFFACWLPYYVCLTT. At 269-289 the chain is on the extracellular side; the sequence is DTFMLLGLVKGDCIWENTLHM. A helical transmembrane segment spans residues 290 to 309; it reads AISITEALAFFHCCLNPILY. Over 310 to 358 the chain is Cytoplasmic; sequence AFLGAKFKTSAQNAFTSVSRGSSLKILSKKRAGLSSVSTESESSSFHSS. The segment at 338 to 358 is disordered; the sequence is KKRAGLSSVSTESESSSFHSS. Residues 344-358 are compositionally biased toward low complexity; it reads SSVSTESESSSFHSS.

The protein belongs to the G-protein coupled receptor 1 family. As to quaternary structure, monomer. Can form dimers. In terms of processing, sulfation is required for efficient binding of cxcl12/sdf-1alpha and promotes its dimerization. Post-translationally, O- and N-glycosylated. Highly expressed in the embryonic nervous system including forebrain, hindbrain and sensory organs (including eye), and in neural crest cells. Also expressed in the dorsal lateral plate, the first site of definitive hematopoiesis in the embryo. Appears in migrating presumptive primordial germ cells (pPGCs) from stage 24. Expressed in the epidermis at stage 40. In the adult, highly expressed in the spleen with lower levels of expression in the liver and very low levels in kidney, heart, skin and brain.

Its subcellular location is the cell membrane. The protein localises to the cytoplasm. It is found in the nucleus. It localises to the early endosome. The protein resides in the late endosome. Its subcellular location is the lysosome. Functionally, receptor for the C-X-C chemokine cxcl12/sdf-1. Transduces a signal by increasing the intracellular level of calcium ions. Signaling with cxcl12/sdf-1 mediates the directional movement of mesodermal cells during gastrulation. May play a role in the migration of embryonic presumptive primordial germ cells (pPGCs). May also be involved in regulating the migration of hematopoietic stem cells into the larval liver. The polypeptide is C-X-C chemokine receptor type 4-A (cxcr4-a) (Xenopus laevis (African clawed frog)).